Consider the following 294-residue polypeptide: Eukaryotic translation initiation factor 3 subunit F (294 aa).

The MPN domain maps to 20–163 (VTVTAQALFQ…IDPSKNSGNC (144 aa)).

Belongs to the eIF-3 subunit F family. As to quaternary structure, component of the eukaryotic translation initiation factor 3 (eIF-3) complex.

It localises to the cytoplasm. In terms of biological role, component of the eukaryotic translation initiation factor 3 (eIF-3) complex, which is involved in protein synthesis of a specialized repertoire of mRNAs and, together with other initiation factors, stimulates binding of mRNA and methionyl-tRNAi to the 40S ribosome. The eIF-3 complex specifically targets and initiates translation of a subset of mRNAs involved in cell proliferation. The sequence is that of Eukaryotic translation initiation factor 3 subunit F from Yarrowia lipolytica (strain CLIB 122 / E 150) (Yeast).